Reading from the N-terminus, the 172-residue chain is RNA silencing suppressor p19 (172 aa).

The disordered stretch occupies residues glutamate 153–glutamate 172.

This sequence belongs to the tombusvirus protein p19 family. Homodimer.

Functionally, viral suppressor of RNA silencing which binds specifically to silencing RNAs (siRNAs). Acts as a molecular caliper to specifically select siRNAs based on the length of the duplex region of the RNA. This Pear latent virus (PeLV) protein is RNA silencing suppressor p19.